Reading from the N-terminus, the 321-residue chain is Glutaminase (321 aa).

Positions 69, 120, 165, 172, 196, 248, and 266 each coordinate substrate.

This sequence belongs to the glutaminase family. As to quaternary structure, homotetramer.

The catalysed reaction is L-glutamine + H2O = L-glutamate + NH4(+). The sequence is that of Glutaminase from Bacteroides fragilis (strain YCH46).